The chain runs to 507 residues: Proton-coupled zinc antiporter SLC30A1 (507 aa).

Residues 1-10 (MGCWGRNRGR) are Cytoplasmic-facing. The chain crosses the membrane as a helical span at residues 11–31 (LLCMLALTFMFMVLEVVVSRV). Topologically, residues 32–35 (TSSL) are extracellular. The helical transmembrane segment at 36–56 (AMLSDSFHMLSDVLALVVALV) threads the bilayer. Zn(2+)-binding residues include H43 and D47. Residues 57–78 (AERFARRTHATQKNTFGWIRAE) lie on the Cytoplasmic side of the membrane. Residues 79-99 (VMGALVNAIFLTGLCFAILLE) form a helical membrane-spanning segment. Residues 100 to 113 (AIERFIEPHEMQQP) are Extracellular-facing. The chain crosses the membrane as a helical span at residues 114–134 (LVVLGVGVAGLLVNVLGLCLF). Topologically, residues 135 to 248 (HHHSGFSQDS…RAGQLNMRGV (114 aa)) are cytoplasmic. Residues 142 to 217 (QDSGHGHSHG…DPENPRSGDT (76 aa)) are disordered. Residues 146 to 158 (HGHSHGGHGHGHG) form a 6 X 2 AA approximate repeats of H-G region. Residues 147–167 (GHSHGGHGHGHGLPKGPRVKS) are compositionally biased toward basic residues. A compositionally biased stretch (polar residues) spans 189–201 (TNTLVANTSNSNG). Residues 249 to 269 (FLHVLGDALGSVIVVVNALVF) traverse the membrane as a helical segment. Zn(2+)-binding residues include H251 and D255. Residues 270–308 (YFSWKGCSEGDFCVNPCFPDPCKAFVEIINSTHASVYEA) lie on the Extracellular side of the membrane. N299 is a glycosylation site (N-linked (GlcNAc...) asparagine). Residues 309–329 (GPCWVLYLDPTLCVVMVCILL) form a helical membrane-spanning segment. Residues 330–507 (YTTYPLLKES…MPNKQPESSL (178 aa)) lie on the Cytoplasmic side of the membrane. S506 is modified (phosphoserine).

The protein belongs to the cation diffusion facilitator (CDF) transporter (TC 2.A.4) family. SLC30A subfamily. As to quaternary structure, homodimer. Interacts with TMEM163. Interacts and forms a complex with TMC6 and TMC8; the interaction regulates zinc transport into the ER. In terms of assembly, (Microbial infection) Interacts with human papillomavirus 16/HPV16 protein E5; the interaction alleviates SLC30A1-mediated transcription factors inhibition. N-glycosylated at Asn-299. N-glycosylation promotes endocytosis and degradation through the proteasomal or lysosomal pathways.

It localises to the cell membrane. It is found in the basolateral cell membrane. The protein resides in the cytoplasmic vesicle membrane. Its subcellular location is the cytoplasm. The protein localises to the endoplasmic reticulum membrane. It localises to the golgi apparatus membrane. It is found in the nucleus membrane. It catalyses the reaction Zn(2+)(in) + 2 H(+)(out) = Zn(2+)(out) + 2 H(+)(in). Its function is as follows. Zinc ion:proton antiporter that could function at the plasma membrane mediating zinc efflux from cells against its electrochemical gradient protecting them from intracellular zinc accumulation and toxicity. Alternatively, could prevent the transport to the plasma membrane of CACNB2, the L-type calcium channels regulatory subunit, through a yet to be defined mechanism. By modulating the expression of these channels at the plasma membrane, could prevent calcium and zinc influx into cells. By the same mechanism, could also prevent L-type calcium channels-mediated heavy metal influx into cells. In some cells, could also function as a zinc ion:proton antiporter mediating zinc entry into the lumen of cytoplasmic vesicles. In macrophages, can increase zinc ions concentration into the lumen of cytoplasmic vesicles containing engulfed bacteria and could help inactivate them. Forms a complex with TMC6/EVER1 and TMC8/EVER2 at the ER membrane of keratynocytes which facilitates zinc uptake into the ER. Down-regulates the activity of transcription factors induced by zinc and cytokines. The protein is Proton-coupled zinc antiporter SLC30A1 of Homo sapiens (Human).